The primary structure comprises 301 residues: Putative S-adenosyl-L-methionine-dependent methyltransferase MUL_0450 (301 aa).

S-adenosyl-L-methionine contacts are provided by residues D127 and 156–157 (DL).

Belongs to the UPF0677 family.

Exhibits S-adenosyl-L-methionine-dependent methyltransferase activity. This chain is Putative S-adenosyl-L-methionine-dependent methyltransferase MUL_0450, found in Mycobacterium ulcerans (strain Agy99).